The chain runs to 134 residues: Phosphoribosyl-AMP cyclohydrolase (134 aa).

Asp77 contributes to the Mg(2+) binding site. Cys78 is a binding site for Zn(2+). Mg(2+) contacts are provided by Asp79 and Asp81. Zn(2+) is bound by residues Cys95 and Cys102.

This sequence belongs to the PRA-CH family. As to quaternary structure, homodimer. Mg(2+) serves as cofactor. Requires Zn(2+) as cofactor.

Its subcellular location is the cytoplasm. The catalysed reaction is 1-(5-phospho-beta-D-ribosyl)-5'-AMP + H2O = 1-(5-phospho-beta-D-ribosyl)-5-[(5-phospho-beta-D-ribosylamino)methylideneamino]imidazole-4-carboxamide. Its pathway is amino-acid biosynthesis; L-histidine biosynthesis; L-histidine from 5-phospho-alpha-D-ribose 1-diphosphate: step 3/9. In terms of biological role, catalyzes the hydrolysis of the adenine ring of phosphoribosyl-AMP. The sequence is that of Phosphoribosyl-AMP cyclohydrolase from Pseudomonas paraeruginosa (strain DSM 24068 / PA7) (Pseudomonas aeruginosa (strain PA7)).